Here is a 463-residue protein sequence, read N- to C-terminus: Histone acetyltransferase mst1 (463 aa).

In terms of domain architecture, Tudor-knot spans 22–74 (VYKSKVFAFKDGEYRKAEILMIQKRTRGVVYYVHYNDYNKRLDEWITIDNIDL). The tract at residues 76–145 (KGIEYPPPEK…GSNAGNESLP (70 aa)) is disordered. Basic residues predominate over residues 87–99 (KKAHGKGKSSKRP). The segment covering 111–121 (PSKTEPSTPST) has biased composition (low complexity). Residues 179–451 (ARIRNINKIC…NGDLLADWQP (273 aa)) enclose the MYST-type HAT domain. The C2HC MYST-type zinc finger occupies 212–237 (VYICSFCFCYYGSERQFQRHREKCTL). Residues 262-283 (RTWCRNICLLSKLFLDHKMLYY) carry the ESA1-RPD3 motif motif. Residue Lys279 is modified to N6-acetyllysine; by autocatalysis. Acetyl-CoA is bound by residues 320–324 (ACILT) and 329–335 (QRHGYGK). The active-site Proton donor/acceptor is Glu355. Residue Ser359 coordinates acetyl-CoA.

Belongs to the MYST (SAS/MOZ) family. Component of the NuA4 histone acetyltransferase complex. Interacts with arp4. In terms of processing, autoacetylation at Lys-279 is required for proper function.

It localises to the nucleus. It is found in the chromosome. The catalysed reaction is L-lysyl-[histone] + acetyl-CoA = N(6)-acetyl-L-lysyl-[histone] + CoA + H(+). It carries out the reaction L-lysyl-[protein] + acetyl-CoA = N(6)-acetyl-L-lysyl-[protein] + CoA + H(+). The enzyme catalyses 2-hydroxyisobutanoyl-CoA + L-lysyl-[protein] = N(6)-(2-hydroxyisobutanoyl)-L-lysyl-[protein] + CoA + H(+). It catalyses the reaction (2E)-butenoyl-CoA + L-lysyl-[protein] = N(6)-(2E)-butenoyl-L-lysyl-[protein] + CoA + H(+). Its function is as follows. Catalytic component of the NuA4 histone acetyltransferase (HAT) complex which is involved in epigenetic transcriptional activation of selected genes principally by acetylation of nucleosomal histones H4, H3, H2B, H2A and H2A variant H2A.Z. Acetylates histone H4 to form H4K5ac, H4K8ac, H4K12ac and H4K16ac, histone H3 to form H3K14ac, and histone H2A to form H2AK4ac and H2AK7ac. The NuA4 complex is involved in the DNA damage response and is required for chromosome segregation. The NuA4 complex plays a direct role in repair of DNA double-strand breaks (DSBs) through homologous recombination. Recruitment to promoters depends on H3K4me. Also acetylates non-histone proteins. In addition to protein acetyltransferase, can use different acyl-CoA substrates, such as 2-hydroxyisobutanoyl-CoA (2-hydroxyisobutyryl-CoA) or (2E)-butenoyl-CoA (crotonyl-CoA), and is able to mediate protein 2-hydroxyisobutyrylation and crotonylation, respectively. This Schizosaccharomyces pombe (strain 972 / ATCC 24843) (Fission yeast) protein is Histone acetyltransferase mst1.